A 190-amino-acid chain; its full sequence is MPKASEIKKNIAISYDNKTYIVKDIERSVPQGRAGGSLYRMRMYDVVTGRKLDETFKDSDMIDLADLVRRQVMFSYSDGDEFVFMDNEDYTPYSLNKSAIEEEILFVNEETVGIQVVLVNEVPVVIELPTNVELEVIETDPSIKGASATSRNKPAKLSTGAVIQVPEHISTGDRIKVNVEERKFAGRAEK.

The protein belongs to the elongation factor P family.

This is Elongation factor P-like protein from Marinomonas sp. (strain MWYL1).